A 57-amino-acid polypeptide reads, in one-letter code: U-Asilidin(1)-Mar2a (57 aa).

The signal sequence occupies residues 1-24 (MAPLLKLNILLLIVLICFTFHANA). 3 cysteine pairs are disulfide-bonded: Cys28–Cys44, Cys35–Cys48, and Cys43–Cys53.

This sequence belongs to the asilidin-1 family. As to expression, expressed by the venom gland. Exclusively expressed in the venom thoracic glands (and not in body tissues).

The protein localises to the secreted. Functionally, may act as a neurotoxin. The chain is U-Asilidin(1)-Mar2a from Machimus arthriticus (Breck robberfly).